Here is a 151-residue protein sequence, read N- to C-terminus: Large ribosomal subunit protein bL9 (151 aa).

This sequence belongs to the bacterial ribosomal protein bL9 family.

Its function is as follows. Binds to the 23S rRNA. The chain is Large ribosomal subunit protein bL9 from Mycoplasmopsis agalactiae (strain NCTC 10123 / CIP 59.7 / PG2) (Mycoplasma agalactiae).